The sequence spans 573 residues: Methionine--tRNA ligase (573 aa).

Residues 10-20 (PYVNSVPHLGN) carry the 'HIGH' region motif. Zn(2+)-binding residues include Cys-143, Cys-146, Cys-156, and Cys-159. The 'KMSKS' region signature appears at 333–337 (KFSKS). Lys-336 is an ATP binding site.

Belongs to the class-I aminoacyl-tRNA synthetase family. MetG type 1 subfamily. Zn(2+) is required as a cofactor.

It is found in the cytoplasm. It carries out the reaction tRNA(Met) + L-methionine + ATP = L-methionyl-tRNA(Met) + AMP + diphosphate. In terms of biological role, is required not only for elongation of protein synthesis but also for the initiation of all mRNA translation through initiator tRNA(fMet) aminoacylation. In Saccharolobus solfataricus (strain ATCC 35092 / DSM 1617 / JCM 11322 / P2) (Sulfolobus solfataricus), this protein is Methionine--tRNA ligase.